We begin with the raw amino-acid sequence, 524 residues long: Origin of replication complex subunit 5 (524 aa).

The segment covering 1 to 19 has biased composition (low complexity); sequence MSQPVTPRRTTRSSASASP. A disordered region spans residues 1–56; it reads MSQPVTPRRTTRSSASASPSPAPASPTSPPKSRPKPSPRRQLLAAAAAPPKEDGSS. Residues 20–31 are compositionally biased toward pro residues; it reads SPAPASPTSPPK. The segment covering 39–49 has biased composition (low complexity); sequence RRQLLAAAAAP. 90-97 is a binding site for ATP; it reads GGAATGKT.

It belongs to the ORC5 family. As to quaternary structure, component of the origin recognition complex (ORC) composed of at least ORC1, ORC2, ORC3, ORC4, ORC5 and ORC6. ORC is regulated in a cell-cycle and development dependent manner. It is sequentially assembled at the exit from anaphase of mitosis and disassembled as cells enter S phase.

It is found in the nucleus. Functionally, component of the origin recognition complex (ORC) that binds origins of replication. DNA-binding is ATP-dependent. The specific DNA sequences that define origins of replication have not been identified yet. ORC is required to assemble the pre-replication complex necessary to initiate DNA replication. The polypeptide is Origin of replication complex subunit 5 (Oryza sativa subsp. indica (Rice)).